The primary structure comprises 270 residues: Cytochrome c oxidase subunit 3 (270 aa).

The next 7 membrane-spanning stretches (helical) occupy residues 21–41 (PWPF…VLYF), 46–66 (GSLV…FVWW), 90–110 (GIML…WAFF), 131–151 (FFSP…SGCA), 167–187 (AIFS…FQIY), 205–225 (FFMI…FLFV), and 248–268 (WYWH…YWWG).

The protein belongs to the cytochrome c oxidase subunit 3 family. In terms of assembly, component of the cytochrome c oxidase (complex IV, CIV), a multisubunit enzyme composed of a catalytic core of 3 subunits and several supernumerary subunits. The complex exists as a monomer or a dimer and forms supercomplexes (SCs) in the inner mitochondrial membrane with ubiquinol-cytochrome c oxidoreductase (cytochrome b-c1 complex, complex III, CIII).

The protein resides in the mitochondrion inner membrane. It catalyses the reaction 4 Fe(II)-[cytochrome c] + O2 + 8 H(+)(in) = 4 Fe(III)-[cytochrome c] + 2 H2O + 4 H(+)(out). Its function is as follows. Component of the cytochrome c oxidase, the last enzyme in the mitochondrial electron transport chain which drives oxidative phosphorylation. The respiratory chain contains 3 multisubunit complexes succinate dehydrogenase (complex II, CII), ubiquinol-cytochrome c oxidoreductase (cytochrome b-c1 complex, complex III, CIII) and cytochrome c oxidase (complex IV, CIV), that cooperate to transfer electrons derived from NADH and succinate to molecular oxygen, creating an electrochemical gradient over the inner membrane that drives transmembrane transport and the ATP synthase. Cytochrome c oxidase is the component of the respiratory chain that catalyzes the reduction of oxygen to water. Electrons originating from reduced cytochrome c in the intermembrane space (IMS) are transferred via the dinuclear copper A center (CU(A)) of subunit 2 and heme A of subunit 1 to the active site in subunit 1, a binuclear center (BNC) formed by heme A3 and copper B (CU(B)). The BNC reduces molecular oxygen to 2 water molecules using 4 electrons from cytochrome c in the IMS and 4 protons from the mitochondrial matrix. The sequence is that of Cytochrome c oxidase subunit 3 (COX3) from Cyanidium caldarium (Red alga).